Here is a 147-residue protein sequence, read N- to C-terminus: Small ribosomal subunit protein uS5 (147 aa).

The region spanning 9–72 (FEEVIVDIGR…DDAFKNIIHV (64 aa)) is the S5 DRBM domain.

Belongs to the universal ribosomal protein uS5 family. In terms of assembly, part of the 30S ribosomal subunit. Contacts proteins S4 and S8.

Its function is as follows. With S4 and S12 plays an important role in translational accuracy. Located at the back of the 30S subunit body where it stabilizes the conformation of the head with respect to the body. This Campylobacter concisus (strain 13826) protein is Small ribosomal subunit protein uS5.